Consider the following 210-residue polypeptide: MKMILGRKIGMTRLFINDVSIPVTVVRAGPCYVVQKKNPQIDGYCAIQVGFEHLKRVNKPLEGHFKKAQVKPLRLLREIRLEDENELDSYEIGQEIKLDIFQPGEKVDITGWTKGRGFSGGIKRWGFSGGPRAHGSKFHRELGSLGQHTEPAKIFKGKKMPGRYGNERVTIHNLEVIKIDLENNLLVLKGSVPGARGSLVIIKSPRRTRK.

It belongs to the universal ribosomal protein uL3 family. In terms of assembly, part of the 50S ribosomal subunit. Forms a cluster with proteins L14 and L19.

One of the primary rRNA binding proteins, it binds directly near the 3'-end of the 23S rRNA, where it nucleates assembly of the 50S subunit. The sequence is that of Large ribosomal subunit protein uL3 from Pseudothermotoga lettingae (strain ATCC BAA-301 / DSM 14385 / NBRC 107922 / TMO) (Thermotoga lettingae).